The primary structure comprises 148 residues: Large ribosomal subunit protein bL9 (148 aa).

This sequence belongs to the bacterial ribosomal protein bL9 family.

Functionally, binds to the 23S rRNA. The chain is Large ribosomal subunit protein bL9 from Bacillus thuringiensis subsp. konkukian (strain 97-27).